The following is a 286-amino-acid chain: PTS system mannose-specific EIID component (286 aa).

Position 1 is an N-formylmethionine (M1). The Cytoplasmic portion of the chain corresponds to 1–17; sequence MSEMVDTTQTTTEKKLT. The PTS EIID domain maps to 14-284; the sequence is KKLTQSDIRG…GIAGYACGLL (271 aa). The stretch at 18-55 is an intramembrane region; that stretch reads QSDIRGVFLRSNLFQGSWNFERMQALGFCFSMVPAIRR. At 56–62 the chain is on the cytoplasmic side; sequence LYPENNE. An intramembrane segment occupies 63–95; it reads ARKQAIRRHLEFFNTQPFVAAPILGVTLALEEQ. At 96–103 the chain is on the cytoplasmic side; it reads RANGAEID. The segment at 104–143 is a transmembrane helix; the sequence is DGAINGIKVGLMGPLAGVGDPIFWGTVRPVFAALGAGIAM. At 144–147 the chain is on the periplasmic side; that stretch reads SGSL. Residues 148-176 are membrane-embedded; it reads LGPLLFFILFNLVRLATRYYGVAYGYSKG. At 177 to 186 the chain is on the cytoplasmic side; that stretch reads IDIVKDMGGG. Positions 187-212 form a transmembrane segment; that stretch reads FLQKLTEGASILGLFVMGALVNKWTH. Topologically, residues 213 to 244 are periplasmic; the sequence is VNIPLVVSRITDQTGKEHVTTVQTILDQLMPG. The segment at 245 to 258 is a transmembrane helix; the sequence is LVPLLLTFACMWLL. Over 259-264 the chain is Cytoplasmic; the sequence is RKKVNP. At 265–283 the chain is embedded in the membrane; that stretch reads LWIIVGFFVIGIAGYACGL. Topologically, residues 284–286 are periplasmic; it reads LGL.

As to quaternary structure, homotrimer of protomers that are composed of two subunits, IIC and IID.

It localises to the cell inner membrane. The phosphoenolpyruvate-dependent sugar phosphotransferase system (sugar PTS), a major carbohydrate active transport system, catalyzes the phosphorylation of incoming sugar substrates concomitantly with their translocation across the cell membrane. The enzyme II ManXYZ PTS system is involved in mannose transport. The protein is PTS system mannose-specific EIID component (manZ) of Escherichia coli O6:H1 (strain CFT073 / ATCC 700928 / UPEC).